The sequence spans 338 residues: 5-dehydro-2-deoxygluconokinase (338 aa).

It belongs to the carbohydrate kinase PfkB family.

It catalyses the reaction 5-dehydro-2-deoxy-D-gluconate + ATP = 6-phospho-5-dehydro-2-deoxy-D-gluconate + ADP + H(+). It functions in the pathway polyol metabolism; myo-inositol degradation into acetyl-CoA; acetyl-CoA from myo-inositol: step 5/7. Its function is as follows. Catalyzes the phosphorylation of 5-dehydro-2-deoxy-D-gluconate (2-deoxy-5-keto-D-gluconate or DKG) to 6-phospho-5-dehydro-2-deoxy-D-gluconate (DKGP). This Mesomycoplasma hyopneumoniae (strain 232) (Mycoplasma hyopneumoniae) protein is 5-dehydro-2-deoxygluconokinase.